Consider the following 142-residue polypeptide: 3-hydroxyacyl-[acyl-carrier-protein] dehydratase FabZ (142 aa).

Residue His50 is part of the active site.

This sequence belongs to the thioester dehydratase family. FabZ subfamily.

It localises to the cytoplasm. The enzyme catalyses a (3R)-hydroxyacyl-[ACP] = a (2E)-enoyl-[ACP] + H2O. Involved in unsaturated fatty acids biosynthesis. Catalyzes the dehydration of short chain beta-hydroxyacyl-ACPs and long chain saturated and unsaturated beta-hydroxyacyl-ACPs. In Clostridium tetani (strain Massachusetts / E88), this protein is 3-hydroxyacyl-[acyl-carrier-protein] dehydratase FabZ.